The chain runs to 402 residues: Putative polyketide beta-ketoacyl synthase 2 (402 aa).

Disordered regions lie at residues 1–30 (MTPVAVTGMGIAAPNGLGRPTTGRPPWAPR) and 188–222 (VEPRSAPGAGSPSSPAGGMSDSDEPNRAYLPFDRD). The Ketosynthase family 3 (KS3) domain maps to 1–400 (MTPVAVTGMG…GFNSALVVRA (400 aa)). Residues 192–205 (SAPGAGSPSSPAGG) are compositionally biased toward low complexity.

It belongs to the thiolase-like superfamily. Beta-ketoacyl-ACP synthases family.

It participates in antifungal biosynthesis; monensin biosynthesis. This Streptomyces virginiae (Streptomyces cinnamonensis) protein is Putative polyketide beta-ketoacyl synthase 2.